Here is a 544-residue protein sequence, read N- to C-terminus: U1 small nuclear ribonucleoprotein component PRP42 (544 aa).

HAT repeat units follow at residues 7-39 (LIHDENFSTLTLNVSRYPKSLAYWEKLLNYIVK), 51-83 (QLLKLIRCTYSSMLNEFPYLENYYIDFALLEYK), 85-118 (GNVSMSHKIFQRGLQAFNQRSLLLWTSYLKFCNN), 121-156 (SHQKQLFKKYETAEEYVGLHFFSGEFWDLYLEQISS), and 163-195 (KYWNVLRKILEIPLHSFSKFYALWLQRIDDIMD). The Nuclear localization signal motif lies at 230–235 (KKKLKK). HAT repeat units lie at residues 255 to 288 (FESKIYINYYTSPETLVSSDEIETWIKYLDYTIT), 290 to 322 (QTDSLTHLNFQRALLPLAHYDLVWIKYSKWLIN), 366 to 397 (NLLEKIESSYSDNVENVDDFEIFWDYLQFKTF), and 456 to 488 (VEKNIFQKIIEFGWEYYLQNGMFWNCYCRLIYF).

Component of the 18S U1 snRNP particle, a subcomplex of the spliceosome.

It localises to the nucleus. Essential component of the U1 snRNP particle, which recognizes and binds the 5'-splice site of pre-mRNA. Together with other non-snRNP factors, U1 snRNP forms the spliceosomal commitment complex, that targets pre-mRNA to the splicing pathway. U1 snRNP is cotranscriptionally recruited to intron-containing genes. Required for U1 snRNP biogenesis. The chain is U1 small nuclear ribonucleoprotein component PRP42 (PRP42) from Saccharomyces cerevisiae (strain ATCC 204508 / S288c) (Baker's yeast).